The following is a 361-amino-acid chain: Chorismate synthase (361 aa).

The disordered stretch occupies residues 37–59 (TEADLQHDLDRRRPGTSRYTTQR). A compositionally biased stretch (basic and acidic residues) spans 40-49 (DLQHDLDRRR). 2 residues coordinate NADP(+): R48 and R54. Residues 125–127 (RSS), 238–239 (NA), G278, 293–297 (KPTSS), and R319 each bind FMN.

Belongs to the chorismate synthase family. In terms of assembly, homotetramer. FMNH2 is required as a cofactor.

It catalyses the reaction 5-O-(1-carboxyvinyl)-3-phosphoshikimate = chorismate + phosphate. It functions in the pathway metabolic intermediate biosynthesis; chorismate biosynthesis; chorismate from D-erythrose 4-phosphate and phosphoenolpyruvate: step 7/7. Functionally, catalyzes the anti-1,4-elimination of the C-3 phosphate and the C-6 proR hydrogen from 5-enolpyruvylshikimate-3-phosphate (EPSP) to yield chorismate, which is the branch point compound that serves as the starting substrate for the three terminal pathways of aromatic amino acid biosynthesis. This reaction introduces a second double bond into the aromatic ring system. The polypeptide is Chorismate synthase (Serratia proteamaculans (strain 568)).